The primary structure comprises 20 residues: Putative 18 kDa spermidine-binding protein (20 aa).

Dimer of 18 kDa and 60 kDa subunit.

Its subcellular location is the microsome membrane. It localises to the endoplasmic reticulum membrane. May have spermidine-binding activity. The sequence is that of Putative 18 kDa spermidine-binding protein from Zea mays (Maize).